We begin with the raw amino-acid sequence, 427 residues long: UPF0229 protein YeaH (427 aa).

The span at 79 to 90 shows a compositional bias: basic and acidic residues; it reads NDHFIQNDRIER. The interval 79 to 110 is disordered; the sequence is NDHFIQNDRIERPQGGGGGSGSGQGQASQDGE. Over residues 92-102 the composition is skewed to gly residues; sequence QGGGGGSGSGQ.

Belongs to the UPF0229 family.

The sequence is that of UPF0229 protein YeaH from Salmonella paratyphi B (strain ATCC BAA-1250 / SPB7).